We begin with the raw amino-acid sequence, 406 residues long: Dual-specificity RNA methyltransferase RlmN (406 aa).

Glu-121 acts as the Proton acceptor in catalysis. Residues 127–377 (ERDRGTLCVS…VRTPRGRDIL (251 aa)) enclose the Radical SAM core domain. A disulfide bridge links Cys-134 with Cys-380. Positions 141, 145, and 148 each coordinate [4Fe-4S] cluster. Residues 206-207 (GE), Ser-238, 260-262 (SLH), and Asn-337 contribute to the S-adenosyl-L-methionine site. Cys-380 functions as the S-methylcysteine intermediate in the catalytic mechanism.

It belongs to the radical SAM superfamily. RlmN family. Requires [4Fe-4S] cluster as cofactor.

It localises to the cytoplasm. The enzyme catalyses adenosine(2503) in 23S rRNA + 2 reduced [2Fe-2S]-[ferredoxin] + 2 S-adenosyl-L-methionine = 2-methyladenosine(2503) in 23S rRNA + 5'-deoxyadenosine + L-methionine + 2 oxidized [2Fe-2S]-[ferredoxin] + S-adenosyl-L-homocysteine. It carries out the reaction adenosine(37) in tRNA + 2 reduced [2Fe-2S]-[ferredoxin] + 2 S-adenosyl-L-methionine = 2-methyladenosine(37) in tRNA + 5'-deoxyadenosine + L-methionine + 2 oxidized [2Fe-2S]-[ferredoxin] + S-adenosyl-L-homocysteine. Functionally, specifically methylates position 2 of adenine 2503 in 23S rRNA and position 2 of adenine 37 in tRNAs. m2A2503 modification seems to play a crucial role in the proofreading step occurring at the peptidyl transferase center and thus would serve to optimize ribosomal fidelity. The protein is Dual-specificity RNA methyltransferase RlmN of Azorhizobium caulinodans (strain ATCC 43989 / DSM 5975 / JCM 20966 / LMG 6465 / NBRC 14845 / NCIMB 13405 / ORS 571).